We begin with the raw amino-acid sequence, 197 residues long: Isopentenyl-diphosphate Delta-isomerase (197 aa).

Residues histidine 41 and histidine 48 each contribute to the Mn(2+) site. A Nudix hydrolase domain is found at 46 to 183 (QLHRAFSVFL…AWFMTVLDAA (138 aa)). Residue cysteine 83 is part of the active site. Histidine 85 serves as a coordination point for Mn(2+). Glutamate 103 provides a ligand contact to Mg(2+). Residues glutamate 130 and glutamate 132 each coordinate Mn(2+). Glutamate 132 is a catalytic residue.

The protein belongs to the IPP isomerase type 1 family. Requires Mg(2+) as cofactor. It depends on Mn(2+) as a cofactor.

The protein localises to the cytoplasm. The catalysed reaction is isopentenyl diphosphate = dimethylallyl diphosphate. Its pathway is isoprenoid biosynthesis; dimethylallyl diphosphate biosynthesis; dimethylallyl diphosphate from isopentenyl diphosphate: step 1/1. Its function is as follows. Catalyzes the 1,3-allylic rearrangement of the homoallylic substrate isopentenyl (IPP) to its highly electrophilic allylic isomer, dimethylallyl diphosphate (DMAPP). This is Isopentenyl-diphosphate Delta-isomerase from Streptomyces griseus subsp. griseus (strain JCM 4626 / CBS 651.72 / NBRC 13350 / KCC S-0626 / ISP 5235).